The following is a 1214-amino-acid chain: Lysine-specific demethylase 3A (1214 aa).

A phosphoserine mark is found at serine 150 and serine 209. Polar residues predominate over residues 194–211 (TPSSNRQQNTPQAANSPP). 3 disordered regions span residues 194-215 (TPSS…NIGA), 271-293 (PKGS…STPQ), and 310-398 (KAEL…KSVL). A Phosphoserine modification is found at serine 330. The segment covering 361–370 (LGSQSQNLKE) has biased composition (polar residues). Basic and acidic residues predominate over residues 371-380 (TSVKVDHDSC). Residues 381–391 (CTRSSNKTQTP) are compositionally biased toward polar residues. The segment at 546-571 (CDVCDTTIFNLHWVCPRCGFGVCVDC) adopts a C6-type zinc-finger fold. The LXXLL motif motif lies at 769–773 (LRNLL). Lysine 779 is modified (N6-acetyllysine). Residues 944 to 1167 (MPSRFDDLMA…HCFWLTQEFR (224 aa)) form the JmjC domain. Histidine 1006, aspartate 1008, and histidine 1135 together coordinate Fe cation.

The protein belongs to the JHDM2 histone demethylase family. In terms of assembly, interacts with VRK1. It depends on Fe(2+) as a cofactor. In terms of tissue distribution, testis specific. Expressed only in male germ cells.

It localises to the cytoplasm. The protein resides in the nucleus. The enzyme catalyses N(6),N(6)-dimethyl-L-lysyl(9)-[histone H3] + 2 2-oxoglutarate + 2 O2 = L-lysyl(9)-[histone H3] + 2 formaldehyde + 2 succinate + 2 CO2. In terms of biological role, histone demethylase that specifically demethylates 'Lys-9' of histone H3, thereby playing a central role in histone code. Preferentially demethylates mono- and dimethylated H3 'Lys-9' residue, with a preference for dimethylated residue, while it has weak or no activity on trimethylated H3 'Lys-9'. Demethylation of Lys residue generates formaldehyde and succinate. Involved in hormone-dependent transcriptional activation, by participating in recruitment to androgen-receptor target genes, resulting in H3 'Lys-9' demethylation and transcriptional activation. Involved in spermatogenesis by regulating expression of target genes such as PRM1 and TNP1 which are required for packaging and condensation of sperm chromatin. Directly regulates expression of PPARA and UCP1 and is involved in obesity resistance. The protein is Lysine-specific demethylase 3A (Kdm3a) of Rattus norvegicus (Rat).